Consider the following 433-residue polypeptide: UDP-N-acetylmuramoylalanine--D-glutamate ligase (433 aa).

125–131 contributes to the ATP binding site; it reads GTSGKTT.

It belongs to the MurCDEF family.

It is found in the cytoplasm. The enzyme catalyses UDP-N-acetyl-alpha-D-muramoyl-L-alanine + D-glutamate + ATP = UDP-N-acetyl-alpha-D-muramoyl-L-alanyl-D-glutamate + ADP + phosphate + H(+). It participates in cell wall biogenesis; peptidoglycan biosynthesis. Its function is as follows. Cell wall formation. Catalyzes the addition of glutamate to the nucleotide precursor UDP-N-acetylmuramoyl-L-alanine (UMA). The chain is UDP-N-acetylmuramoylalanine--D-glutamate ligase from Nitratidesulfovibrio vulgaris (strain ATCC 29579 / DSM 644 / CCUG 34227 / NCIMB 8303 / VKM B-1760 / Hildenborough) (Desulfovibrio vulgaris).